Consider the following 42-residue polypeptide: Photosystem II reaction center protein J (42 aa).

The helical transmembrane segment at isoleucine 10 to phenylalanine 30 threads the bilayer.

Belongs to the PsbJ family. In terms of assembly, PSII is composed of 1 copy each of membrane proteins PsbA, PsbB, PsbC, PsbD, PsbE, PsbF, PsbH, PsbI, PsbJ, PsbK, PsbL, PsbM, PsbT, PsbX, PsbY, PsbZ, Psb30/Ycf12, at least 3 peripheral proteins of the oxygen-evolving complex and a large number of cofactors. It forms dimeric complexes.

The protein localises to the plastid. It localises to the chloroplast thylakoid membrane. One of the components of the core complex of photosystem II (PSII). PSII is a light-driven water:plastoquinone oxidoreductase that uses light energy to abstract electrons from H(2)O, generating O(2) and a proton gradient subsequently used for ATP formation. It consists of a core antenna complex that captures photons, and an electron transfer chain that converts photonic excitation into a charge separation. The sequence is that of Photosystem II reaction center protein J from Staurastrum punctulatum (Green alga).